The following is a 64-amino-acid chain: Relaxin (64 aa).

Disulfide bonds link Cys11/Cys51, Cys23/Cys64, and Cys50/Cys55.

This sequence belongs to the insulin family. As to quaternary structure, heterodimer of a B chain and an A chain linked by two disulfide bonds.

It is found in the secreted. This Leucoraja erinaceus (Little skate) protein is Relaxin.